We begin with the raw amino-acid sequence, 184 residues long: Gremlin-1 (184 aa).

A signal peptide spans 1–24 (MNRTAYTVGALLLLLGTLLPTAEG). The interval 23–77 (EGKKKGSQGAIPPPDKAQHNDSEQTQSPPQPGSRTRGRGQGRGTAMPGEEVLESS) is disordered. Asn42 carries N-linked (GlcNAc...) asparagine glycosylation. 4 disulfides stabilise this stretch: Cys94/Cys144, Cys108/Cys158, Cys118/Cys176, and Cys122/Cys178. In terms of domain architecture, CTCK spans 94–184 (CKTQPLKQTI…QCRCISIDLD (91 aa)).

This sequence belongs to the DAN family. As to quaternary structure, homodimer; can also form homooligomers. Interacts with BMP2; can form higher oligomers with BMP2. Interacts with SLIT1 and SLIT2 in a glycosylation-dependent manner. As to expression, highly expressed in spleen and to a lesser extent in lung, skeletal muscle and kidney. Expressed only in non-transformed cells or primary fibroblasts in culture but not in established transformed or tumor derived cell lines. Broadly expressed in limb bud mesenchyme but restricted to the distal limb bud mesenchyme and concentrated posteriorly. Expressed in ovary especially in granulosa cells of follicles of type 4.

The protein localises to the secreted. Cytokine that may play an important role during carcinogenesis and metanephric kidney organogenesis, as BMP a antagonist required for early limb outgrowth and patterning in maintaining the FGF4-SHH feedback loop. Down-regulates the BMP4 signaling in a dose-dependent manner. Antagonist of BMP2; inhibits BMP2-mediated differentiation of osteoblasts (in vitro). Acts as inhibitor of monocyte chemotaxis. This is Gremlin-1 (Grem1) from Mus musculus (Mouse).